The primary structure comprises 536 residues: Inactive phospholipase D5 (536 aa).

Residues 69-89 (IVIFALVCCFAILVALIFSAV) traverse the membrane as a helical segment. Residue Asn-121 is glycosylated (N-linked (GlcNAc...) asparagine). Residues 215 to 242 (NKGRLQSSFWIVDKQHVYIGSAGLDWQS) enclose the PLD phosphodiesterase 1 domain. N-linked (GlcNAc...) asparagine glycosylation is present at Asn-302. One can recognise a PLD phosphodiesterase 2 domain in the interval 434–460 (FPRLNRNKYMVTDGAAYIGNFDWVGND).

Belongs to the phospholipase D family.

Its subcellular location is the membrane. The sequence is that of Inactive phospholipase D5 (PLD5) from Homo sapiens (Human).